The following is a 640-amino-acid chain: SUMO-activating enzyme subunit 2 (640 aa).

Residues 24–29, Asp-48, 56–59, Lys-72, 95–96, and 117–122 contribute to the ATP site; these read GAGGIG, NLNR, SI, and DNRAAR. The Zn(2+) site is built by Cys-158 and Cys-161. Lys-164 is covalently cross-linked (Glycyl lysine isopeptide (Lys-Gly) (interchain with G-Cter in SUMO1)). The active-site Glycyl thioester intermediate is Cys-173. Residue Lys-190 forms a Glycyl lysine isopeptide (Lys-Gly) (interchain with G-Cter in SUMO) linkage. Residues 202-231 are disordered; it reads ADQEVSPDRADPEAAWEPTEAEARARASNE. A Phosphoserine modification is found at Ser-207. The span at 222-231 shows a compositional bias: basic and acidic residues; it reads AEARARASNE. Lys-236 participates in a covalent cross-link: Glycyl lysine isopeptide (Lys-Gly) (interchain with G-Cter in SUMO1); alternate. Glycyl lysine isopeptide (Lys-Gly) (interchain with G-Cter in SUMO2); alternate cross-links involve residues Lys-236 and Lys-257. Residues Lys-257 and Lys-271 each participate in a glycyl lysine isopeptide (Lys-Gly) (interchain with G-Cter in SUMO); alternate cross-link. The residue at position 271 (Lys-271) is an N6-acetyllysine; alternate. Lys-275 participates in a covalent cross-link: Glycyl lysine isopeptide (Lys-Gly) (interchain with G-Cter in SUMO). A Glycyl lysine isopeptide (Lys-Gly) (interchain with G-Cter in SUMO2) cross-link involves residue Lys-371. Lys-420 participates in a covalent cross-link: Glycyl lysine isopeptide (Lys-Gly) (interchain with G-Cter in SUMO1); alternate. Lys-420 is covalently cross-linked (Glycyl lysine isopeptide (Lys-Gly) (interchain with G-Cter in SUMO2); alternate). Residues Cys-441 and Cys-444 each coordinate Zn(2+). Ser-507 bears the Phosphoserine mark. A Glycyl lysine isopeptide (Lys-Gly) (interchain with G-Cter in SUMO2) cross-link involves residue Lys-540. The span at 551-563 shows a compositional bias: basic and acidic residues; the sequence is PEKVGPKQAEDAA. The segment at 551-640 is disordered; that stretch reads PEKVGPKQAE…EELDDVIALD (90 aa). The segment covering 565 to 582 has biased composition (polar residues); it reads SITNGSDDGAQPSTSTAQ. Acidic residues predominate over residues 583-597; the sequence is EQDDVLIVDSDEEDS. Position 592 is a phosphoserine (Ser-592). Over residues 606–630 the composition is skewed to basic and acidic residues; that stretch reads EERSRKRKLDEKENLSAKRSRIEQK. Lys-611 is covalently cross-linked (Glycyl lysine isopeptide (Lys-Gly) (interchain with G-Cter in SUMO)). Residue Lys-613 forms a Glycyl lysine isopeptide (Lys-Gly) (interchain with G-Cter in SUMO); alternate linkage. Lys-613 bears the N6-acetyllysine; alternate mark. Glycyl lysine isopeptide (Lys-Gly) (interchain with G-Cter in SUMO) cross-links involve residues Lys-617 and Lys-623. Acidic residues predominate over residues 631–640; that stretch reads EELDDVIALD.

This sequence belongs to the ubiquitin-activating E1 family. In terms of assembly, heterodimer of SAE1 and UBA2/SAE2. The heterodimer corresponds to the two domains that are encoded on a single polypeptide chain in ubiquitin-activating enzyme E1. Interacts with UBE2I. Post-translationally, sumoylated with SUMO1 and SUMO2/3 and by UBC9. Sumoylation at Lys-236 inhibits enzymatic activity. Sumoylation at the C-terminal lysine cluster plays an essential role in nuclear trafficking.

It is found in the cytoplasm. It localises to the nucleus. It functions in the pathway protein modification; protein sumoylation. In terms of biological role, the heterodimer acts as an E1 ligase for SUMO1, SUMO2, SUMO3, and probably SUMO4. It mediates ATP-dependent activation of SUMO proteins followed by formation of a thioester bond between a SUMO protein and a conserved active site cysteine residue on UBA2/SAE2. This chain is SUMO-activating enzyme subunit 2 (UBA2), found in Homo sapiens (Human).